The primary structure comprises 151 residues: MQVILKEKVENLGVLGDIVNVKPGYARNFLIPFGKAVQATQANIKAFEAQKAELEKAEKARFEAAVAVADAIKDKVYTIAAQAGEGGKLFGSVGIAEVAEAVSNQSGKKIEKSQVRMPEGVIRSIGEFELTVHVYTDVDADIKVNVVAAEA.

The protein belongs to the bacterial ribosomal protein bL9 family.

Binds to the 23S rRNA. The polypeptide is Large ribosomal subunit protein bL9 (Francisella tularensis subsp. holarctica (strain LVS)).